Reading from the N-terminus, the 90-residue chain is U7-theraphotoxin-Hhn1e (90 aa).

Positions 1 to 19 (MKTAIFTVVLALAVFAVLS) are cleaved as a signal peptide. The propeptide occupies 20-50 (FGWEANEKALSEEFTELIHEKEAASETEARE). Cystine bridges form between Cys51–Cys65, Cys58–Cys70, and Cys64–Cys81.

Belongs to the neurotoxin 10 (Hwtx-1) family. 13 (Hntx-13) subfamily. In terms of tissue distribution, expressed by the venom gland.

The protein resides in the secreted. Its function is as follows. Ion channel inhibitor. The sequence is that of U7-theraphotoxin-Hhn1e from Cyriopagopus hainanus (Chinese bird spider).